The chain runs to 379 residues: Sialidase-2 (379 aa).

Positions 20–23 (YRIP) match the FRIP motif motif. Positions 21 and 41 each coordinate substrate. The Proton acceptor role is filled by Asp-46. A BNR 1 repeat occupies 127–138 (ITSTDHGKTWSA). Substrate-binding residues include Tyr-179 and Tyr-181. One copy of the BNR 2 repeat lies at 197-208 (FLSHDHGSTWEL). Substrate is bound by residues Glu-218, Arg-237, and Arg-303. Residue Tyr-333 is the Nucleophile of the active site. The active site involves Glu-354.

Belongs to the glycosyl hydrolase 33 family.

It is found in the cytoplasm. It catalyses the reaction Hydrolysis of alpha-(2-&gt;3)-, alpha-(2-&gt;6)-, alpha-(2-&gt;8)- glycosidic linkages of terminal sialic acid residues in oligosaccharides, glycoproteins, glycolipids, colominic acid and synthetic substrates.. Functionally, catalyzes the removal of sialic acid (N-acetylneuraminic acid) moieties from glycoproteins, oligosaccharides and gangliosides. This chain is Sialidase-2 (NEU2), found in Cricetulus griseus (Chinese hamster).